The following is a 179-amino-acid chain: MIP18 family protein C144.16 (179 aa).

Residues 1-26 (MSANLQNENPEVKELNQLPSRVEEEE) are disordered.

It belongs to the MIP18 family.

In terms of biological role, may play a role in chromosome segregation through establishment of sister chromatid cohesion. This Schizosaccharomyces pombe (strain 972 / ATCC 24843) (Fission yeast) protein is MIP18 family protein C144.16.